The chain runs to 131 residues: Peptide methionine sulfoxide reductase MsrB (131 aa).

The 123-residue stretch at 8-130 (LDEWRSMLDP…NSVCIDLRPR (123 aa)) folds into the MsrB domain. Zn(2+) contacts are provided by C47, C50, C96, and C99. C119 serves as the catalytic Nucleophile.

The protein belongs to the MsrB Met sulfoxide reductase family. Zn(2+) is required as a cofactor.

It catalyses the reaction L-methionyl-[protein] + [thioredoxin]-disulfide + H2O = L-methionyl-(R)-S-oxide-[protein] + [thioredoxin]-dithiol. In Pseudomonas putida (strain ATCC 47054 / DSM 6125 / CFBP 8728 / NCIMB 11950 / KT2440), this protein is Peptide methionine sulfoxide reductase MsrB.